The primary structure comprises 294 residues: Shikimate dehydrogenase (NADP(+)) (294 aa).

Shikimate is bound by residues 14-16 (SKS) and Thr-61. Residue Lys-65 is the Proton acceptor of the active site. An NADP(+)-binding site is contributed by Asp-77. Asn-86 and Asp-102 together coordinate shikimate. Residues 140–144 (GSGGA) and Leu-235 each bind NADP(+). Tyr-237 is a shikimate binding site. An NADP(+)-binding site is contributed by Gly-259.

Belongs to the shikimate dehydrogenase family. Homodimer.

The catalysed reaction is shikimate + NADP(+) = 3-dehydroshikimate + NADPH + H(+). It functions in the pathway metabolic intermediate biosynthesis; chorismate biosynthesis; chorismate from D-erythrose 4-phosphate and phosphoenolpyruvate: step 4/7. Functionally, involved in the biosynthesis of the chorismate, which leads to the biosynthesis of aromatic amino acids. Catalyzes the reversible NADPH linked reduction of 3-dehydroshikimate (DHSA) to yield shikimate (SA). In Blochmanniella floridana, this protein is Shikimate dehydrogenase (NADP(+)).